The following is a 300-amino-acid chain: Transcription factor DUO1 (300 aa).

HTH myb-type domains are found at residues 8-64 (KEEI…RPNL) and 65-116 (KNGC…KRLA). 2 DNA-binding regions (H-T-H motif) span residues 36–60 (WSSI…VNKL) and 89–112 (WARI…SSRQ). The segment covering 123–135 (SDASSSSFNPKSS) has biased composition (low complexity). The tract at residues 123-145 (SDASSSSFNPKSSSSHRLKGKNV) is disordered. The span at 136-145 (SSHRLKGKNV) shows a compositional bias: basic residues.

Confined to inflorescences, especially in stamens and pollen.

Its subcellular location is the nucleus. Functionally, transcription activator that acts as a positive regulator of male germline development by promoting both gametic cell specification and cell cycle progression. Binds to canonical MYB sites 5'-AACCGTC-3', 5'-AAACCGC-3' and 5'-AACCGT-3' in promoters to trigger the expression of male germline-specific or enriched genes (e.g. MGH3, GEX2 and GCS1), including those required for fertilization. Required for sperm cell specification leading to pollen maturation by activating a germline-specific regulon. Involved in pollen mitosis entry at G2-M transition via the regulation of CYCB1-1, DAZ1 and DAZ2 expression. In Arabidopsis thaliana (Mouse-ear cress), this protein is Transcription factor DUO1.